Reading from the N-terminus, the 257-residue chain is NAD-capped RNA hydrolase NudC (257 aa).

Positions 25 and 69 each coordinate substrate. Residues Cys98 and Cys101 each coordinate Zn(2+). Residue Glu111 coordinates substrate. 2 residues coordinate Zn(2+): Cys116 and Cys119. Tyr124 is a substrate binding site. Residues 125–248 (PQIAPCIIVA…TVARRLIEDT (124 aa)) form the Nudix hydrolase domain. The a divalent metal cation site is built by Ala158, Glu174, and Glu178. The Nudix box signature appears at 159 to 180 (GFVEVGETLEQAVAREVMEESG). 192-199 (QPWPFPQS) serves as a coordination point for substrate. Glu219 provides a ligand contact to a divalent metal cation. Position 241 (Ala241) interacts with substrate.

Belongs to the Nudix hydrolase family. NudC subfamily. In terms of assembly, homodimer. The cofactor is Mg(2+). It depends on Mn(2+) as a cofactor. Zn(2+) is required as a cofactor.

It carries out the reaction a 5'-end NAD(+)-phospho-ribonucleoside in mRNA + H2O = a 5'-end phospho-adenosine-phospho-ribonucleoside in mRNA + beta-nicotinamide D-ribonucleotide + 2 H(+). It catalyses the reaction NAD(+) + H2O = beta-nicotinamide D-ribonucleotide + AMP + 2 H(+). The enzyme catalyses NADH + H2O = reduced beta-nicotinamide D-ribonucleotide + AMP + 2 H(+). Its function is as follows. mRNA decapping enzyme that specifically removes the nicotinamide adenine dinucleotide (NAD) cap from a subset of mRNAs by hydrolyzing the diphosphate linkage to produce nicotinamide mononucleotide (NMN) and 5' monophosphate mRNA. The NAD-cap is present at the 5'-end of some mRNAs and stabilizes RNA against 5'-processing. Has preference for mRNAs with a 5'-end purine. Catalyzes the hydrolysis of a broad range of dinucleotide pyrophosphates. In Escherichia coli O7:K1 (strain IAI39 / ExPEC), this protein is NAD-capped RNA hydrolase NudC.